The sequence spans 44 residues: DNA-directed RNA polymerase subunit Rpo12 (44 aa).

Residues cysteine 8, cysteine 22, and cysteine 25 each contribute to the Zn(2+) site.

The protein belongs to the archaeal Rpo12/eukaryotic RPC10 RNA polymerase subunit family. In terms of assembly, part of the RNA polymerase complex. Zn(2+) serves as cofactor.

It is found in the cytoplasm. The enzyme catalyses RNA(n) + a ribonucleoside 5'-triphosphate = RNA(n+1) + diphosphate. In terms of biological role, DNA-dependent RNA polymerase (RNAP) catalyzes the transcription of DNA into RNA using the four ribonucleoside triphosphates as substrates. The sequence is that of DNA-directed RNA polymerase subunit Rpo12 from Halobacterium salinarum (strain ATCC 29341 / DSM 671 / R1).